Reading from the N-terminus, the 197-residue chain is Imidazoleglycerol-phosphate dehydratase (197 aa).

Belongs to the imidazoleglycerol-phosphate dehydratase family.

The protein localises to the cytoplasm. The catalysed reaction is D-erythro-1-(imidazol-4-yl)glycerol 3-phosphate = 3-(imidazol-4-yl)-2-oxopropyl phosphate + H2O. The protein operates within amino-acid biosynthesis; L-histidine biosynthesis; L-histidine from 5-phospho-alpha-D-ribose 1-diphosphate: step 6/9. This Teredinibacter turnerae (strain ATCC 39867 / T7901) protein is Imidazoleglycerol-phosphate dehydratase.